Consider the following 209-residue polypeptide: Transcription antitermination protein NusB (209 aa).

It belongs to the NusB family.

Its function is as follows. Involved in transcription antitermination. Required for transcription of ribosomal RNA (rRNA) genes. Binds specifically to the boxA antiterminator sequence of the ribosomal RNA (rrn) operons. The chain is Transcription antitermination protein NusB from Crocosphaera subtropica (strain ATCC 51142 / BH68) (Cyanothece sp. (strain ATCC 51142)).